A 165-amino-acid chain; its full sequence is NADH-quinone oxidoreductase subunit I (165 aa).

2 4Fe-4S ferredoxin-type domains span residues 66-98 and 109-138; these read HRLT…ITAT and SKFT…MDTG. [4Fe-4S] cluster is bound by residues Cys78, Cys81, Cys84, Cys88, Cys118, Cys121, Cys124, and Cys128.

The protein belongs to the complex I 23 kDa subunit family. As to quaternary structure, NDH-1 is composed of 14 different subunits. Subunits NuoA, H, J, K, L, M, N constitute the membrane sector of the complex. [4Fe-4S] cluster is required as a cofactor.

The protein localises to the cell inner membrane. It catalyses the reaction a quinone + NADH + 5 H(+)(in) = a quinol + NAD(+) + 4 H(+)(out). Its function is as follows. NDH-1 shuttles electrons from NADH, via FMN and iron-sulfur (Fe-S) centers, to quinones in the respiratory chain. The immediate electron acceptor for the enzyme in this species is believed to be ubiquinone. Couples the redox reaction to proton translocation (for every two electrons transferred, four hydrogen ions are translocated across the cytoplasmic membrane), and thus conserves the redox energy in a proton gradient. The polypeptide is NADH-quinone oxidoreductase subunit I (Campylobacter fetus subsp. fetus (strain 82-40)).